We begin with the raw amino-acid sequence, 378 residues long: Putative dioxygenase VC_1345 (378 aa).

Residues H288, D294, and H324 each contribute to the Fe cation site.

Belongs to the homogentisate dioxygenase family. Fe cation is required as a cofactor.

The polypeptide is Putative dioxygenase VC_1345 (Vibrio cholerae serotype O1 (strain ATCC 39315 / El Tor Inaba N16961)).